A 271-amino-acid chain; its full sequence is ATP synthase subunit a (271 aa).

5 helical membrane-spanning segments follow: residues 40–60 (TINI…LVLF), 100–120 (LIAP…LMDL), 146–166 (DVNV…FYSI), 220–240 (LIFI…LNVP), and 242–262 (AIFH…LTIV).

It belongs to the ATPase A chain family. As to quaternary structure, F-type ATPases have 2 components, CF(1) - the catalytic core - and CF(0) - the membrane proton channel. CF(1) has five subunits: alpha(3), beta(3), gamma(1), delta(1), epsilon(1). CF(0) has three main subunits: a(1), b(2) and c(9-12). The alpha and beta chains form an alternating ring which encloses part of the gamma chain. CF(1) is attached to CF(0) by a central stalk formed by the gamma and epsilon chains, while a peripheral stalk is formed by the delta and b chains.

The protein resides in the cell inner membrane. Its function is as follows. Key component of the proton channel; it plays a direct role in the translocation of protons across the membrane. The polypeptide is ATP synthase subunit a (Escherichia coli O8 (strain IAI1)).